The following is a 476-amino-acid chain: Zinc metalloproteinase/disintegrin (476 aa).

A signal peptide spans 1 to 20 (MIQVLLVIICLADFPYQGTS). Residues 21-184 (IILESGNVND…KSDEPIKASQ (164 aa)) constitute a propeptide that is removed on maturation. Gln185 carries the post-translational modification Pyrrolidone carboxylic acid. The 197-residue stretch at 191–387 (RYIELVVVAD…RNPQCILNEP (197 aa)) folds into the Peptidase M12B domain. Residues Glu194 and Asp278 each contribute to the Ca(2+) site. Cystine bridges form between Cys302–Cys382, Cys342–Cys366, and Cys344–Cys349. His327 contributes to the Zn(2+) binding site. Residue Glu328 is part of the active site. Positions 331 and 337 each coordinate Zn(2+). Ca(2+)-binding residues include Cys382 and Asn385. Residues 388 to 403 (LRTDTVSTPVSGNELL) constitute a propeptide that is removed on maturation. The Disintegrin domain maps to 395–476 (TPVSGNELLE…AGCPRNGFYG (82 aa)). 6 cysteine pairs are disulfide-bonded: Cys409/Cys424, Cys411/Cys419, Cys418/Cys441, Cys432/Cys438, Cys437/Cys462, and Cys450/Cys469. The Cell attachment site signature appears at 454–456 (KGD).

It belongs to the venom metalloproteinase (M12B) family. P-II subfamily. P-IId sub-subfamily. As to quaternary structure, homodimer; disulfide-linked (disintegrin). Requires Zn(2+) as cofactor. Expressed by the venom gland.

Its subcellular location is the secreted. The metalloproteinase is inhibited by EDTA, o-phenanthroline, and cysteine. Glutathione does not inhibit the enzymatic activity. In terms of biological role, shows weak degradation of alpha-fibrinogen, but has no activity on beta- and gamma-chains. Digests luteinizing hormone-releasing hormone (LH-RH) and oxidized insulin at X-Leu, X-Phe, and X-Val bonds as well as X-His bond. Does not show fibrinogen-clotting activity. Does not show hemorrhagic activity. Functionally, inhibits ADP-induced platelet aggregation. This chain is Zinc metalloproteinase/disintegrin, found in Gloydius brevicauda (Korean slamosa snake).